The sequence spans 245 residues: Tryptophan synthase alpha chain (245 aa).

Active-site proton acceptor residues include Glu-35 and Asp-46.

Belongs to the TrpA family. As to quaternary structure, tetramer of two alpha and two beta chains.

The catalysed reaction is (1S,2R)-1-C-(indol-3-yl)glycerol 3-phosphate + L-serine = D-glyceraldehyde 3-phosphate + L-tryptophan + H2O. Its pathway is amino-acid biosynthesis; L-tryptophan biosynthesis; L-tryptophan from chorismate: step 5/5. The alpha subunit is responsible for the aldol cleavage of indoleglycerol phosphate to indole and glyceraldehyde 3-phosphate. This Sulfurisphaera tokodaii (strain DSM 16993 / JCM 10545 / NBRC 100140 / 7) (Sulfolobus tokodaii) protein is Tryptophan synthase alpha chain.